A 509-amino-acid polypeptide reads, in one-letter code: Glycerol kinase (509 aa).

An ADP-binding site is contributed by T12. Residues T12, T13, and S14 each coordinate ATP. T12 provides a ligand contact to sn-glycerol 3-phosphate. An ADP-binding site is contributed by R16. Residues R82, E83, Y134, and D245 each coordinate sn-glycerol 3-phosphate. Residues R82, E83, Y134, D245, and Q246 each contribute to the glycerol site. 2 residues coordinate ADP: T267 and G311. Positions 267, 311, 315, and 412 each coordinate ATP. Positions 412 and 416 each coordinate ADP.

The protein belongs to the FGGY kinase family.

The enzyme catalyses glycerol + ATP = sn-glycerol 3-phosphate + ADP + H(+). It functions in the pathway polyol metabolism; glycerol degradation via glycerol kinase pathway; sn-glycerol 3-phosphate from glycerol: step 1/1. Its activity is regulated as follows. Inhibited by fructose 1,6-bisphosphate (FBP). Its function is as follows. Key enzyme in the regulation of glycerol uptake and metabolism. Catalyzes the phosphorylation of glycerol to yield sn-glycerol 3-phosphate. This is Glycerol kinase from Rhizorhabdus wittichii (strain DSM 6014 / CCUG 31198 / JCM 15750 / NBRC 105917 / EY 4224 / RW1) (Sphingomonas wittichii).